The following is a 188-amino-acid chain: Adenine phosphoribosyltransferase (188 aa).

It belongs to the purine/pyrimidine phosphoribosyltransferase family. In terms of assembly, homodimer.

The protein localises to the cytoplasm. The enzyme catalyses AMP + diphosphate = 5-phospho-alpha-D-ribose 1-diphosphate + adenine. It functions in the pathway purine metabolism; AMP biosynthesis via salvage pathway; AMP from adenine: step 1/1. In terms of biological role, catalyzes a salvage reaction resulting in the formation of AMP, that is energically less costly than de novo synthesis. In Paraburkholderia xenovorans (strain LB400), this protein is Adenine phosphoribosyltransferase.